The chain runs to 360 residues: Inward rectifier potassium channel 13 (360 aa).

Over 1–50 (MDSSNCKVNAPLLSQRHRRMVTKDGHSTLQMDGAQRGLVYLRDAWGILMD) the chain is Cytoplasmic. A helical membrane pass occupies residues 51-77 (MRWRWMMLVFSASFVVHWLVFAVLWYA). Topologically, residues 78–105 (VAEMNGDLEIDHDVPPENHTICVKHITS) are extracellular. Residues 106–122 (FTAAFSFSLETQLTIGY) constitute an intramembrane region (helical; Pore-forming). Residues 119–124 (TIGYGT) carry the Selectivity filter motif. At 123–131 (GTMFPSGDC) the chain is on the extracellular side. A helical transmembrane segment spans residues 132 to 157 (PSAIALLAIQMLLGLMLEAFITGAFV). At 158 to 360 (AKIARPKNRA…FQIAETGLTE (203 aa)) the chain is on the cytoplasmic side. A Phosphoserine; by PKA modification is found at serine 287.

The protein belongs to the inward rectifier-type potassium channel (TC 1.A.2.1) family. KCNJ13 subfamily. As to quaternary structure, homotetramer. Interacts with RAB28; the interaction may facilitate cone outer segments phagocytosis. Post-translationally, phosphorylation at Ser-287 by PKA increases ionic currents. As to expression, expressed in retina.

It localises to the membrane. Its subcellular location is the cell membrane. The enzyme catalyses K(+)(in) = K(+)(out). Its activity is regulated as follows. Inhibited by Ba(2+) and Cs(+), although sensitivity to those inhibitors is much lower than in other Kir channels. Inward rectifier potassium channels are characterized by a greater tendency to allow potassium to flow into the cell rather than out of it. Their voltage dependence is regulated by the concentration of extracellular potassium; as external potassium is raised, the voltage range of the channel opening shifts to more positive voltages. The inward rectification is mainly due to the blockage of outward current by internal magnesium. KCNJ13 has a very low single channel conductance, low sensitivity to block by external barium and cesium, and no dependence of its inward rectification properties on the internal blocking particle magnesium. The polypeptide is Inward rectifier potassium channel 13 (Mus musculus (Mouse)).